The sequence spans 88 residues: Small ribosomal subunit protein uS15c (88 aa).

The protein belongs to the universal ribosomal protein uS15 family. Part of the 30S ribosomal subunit.

The protein resides in the plastid. The protein localises to the chloroplast. This Arabidopsis thaliana (Mouse-ear cress) protein is Small ribosomal subunit protein uS15c (rps15).